A 66-amino-acid chain; its full sequence is Large ribosomal subunit protein bL33c (66 aa).

Belongs to the bacterial ribosomal protein bL33 family.

The protein resides in the plastid. It localises to the chloroplast. The sequence is that of Large ribosomal subunit protein bL33c from Acorus calamus (Sweet flag).